We begin with the raw amino-acid sequence, 231 residues long: Ribonuclease 3 (231 aa).

Residues 5–134 enclose the RNase III domain; that stretch reads QKGIKEDFGI…FIGALYKDQG (130 aa). E47 is a binding site for Mg(2+). Residue D51 is part of the active site. Mg(2+)-binding residues include D120 and E123. E123 is an active-site residue. The region spanning 160 to 230 is the DRBM domain; that stretch reads DYKSKLQELL…AKKAYQDVTP (71 aa).

The protein belongs to the ribonuclease III family. Homodimer. It depends on Mg(2+) as a cofactor.

The protein localises to the cytoplasm. The catalysed reaction is Endonucleolytic cleavage to 5'-phosphomonoester.. In terms of biological role, digests double-stranded RNA. Involved in the processing of primary rRNA transcript to yield the immediate precursors to the large and small rRNAs (23S and 16S). Processes some mRNAs, and tRNAs when they are encoded in the rRNA operon. Processes pre-crRNA and tracrRNA of type II CRISPR loci if present in the organism. This Oenococcus oeni (strain ATCC BAA-331 / PSU-1) protein is Ribonuclease 3.